We begin with the raw amino-acid sequence, 432 residues long: Probable exopolygalacturonase X (432 aa).

Residues 1–23 (MKFSYSFVQVVSLLLSLSPSVEG) form the signal peptide. 3 N-linked (GlcNAc...) asparagine glycosylation sites follow: Asn-113, Asn-129, and Asn-199. A PbH1 1 repeat occupies 231–252 (SDNIVIQNSVINNGDDCVSFKP). The Proton donor role is filled by Asp-245. A disulfide bond links Cys-247 and Cys-264. N-linked (GlcNAc...) asparagine glycosylation is found at Asn-253 and Asn-265. PbH1 repeat units follow at residues 254–274 (STNIIVQNLHCNGSHGISVGS), 285–306 (VQNVLVYNISMYNASDGARIKV), and 327–348 (VKNITYNQMYIENVDWAIEVTQ). Residue His-268 is part of the active site. 5 N-linked (GlcNAc...) asparagine glycosylation sites follow: Asn-292, Asn-297, Asn-329, Asn-354, and Asn-364. The stretch at 362 to 394 (PSNLTISDIHFKNFRGTTSGKRDPDVGTIVCSS) is one PbH1 5 repeat. A disulfide bridge connects residues Cys-392 and Cys-398.

It belongs to the glycosyl hydrolase 28 family.

The protein localises to the secreted. It catalyses the reaction [(1-&gt;4)-alpha-D-galacturonosyl](n) + H2O = alpha-D-galacturonate + [(1-&gt;4)-alpha-D-galacturonosyl](n-1). Functionally, specific in hydrolyzing the terminal glycosidic bond of polygalacturonic acid and oligogalacturonates. In Neosartorya fischeri (strain ATCC 1020 / DSM 3700 / CBS 544.65 / FGSC A1164 / JCM 1740 / NRRL 181 / WB 181) (Aspergillus fischerianus), this protein is Probable exopolygalacturonase X (pgaX).